Consider the following 362-residue polypeptide: Snurportin-1 (362 aa).

Methionine 1 is subject to N-acetylmethionine. 2 disordered regions span residues 1–40 (MEELSQALAGSFSVSQDLNSTAAPHPRLSQYKSKYSSLEQ) and 69–90 (DWTGMESEEEEEKKDDEEMDVD). The tract at residues 1–65 (MEELSQALAG…LDYVNHARRL (65 aa)) is necessary for interaction with KPNB1 and m3G-cap U1 and U5 snRNP import receptor activity. Positions 1 to 160 (MEELSQALAG…NTFPSLLPGG (160 aa)) are necessary for interaction with XPO1. The region spanning 11 to 73 (SFSVSQDLNS…RLAEDDWTGM (63 aa)) is the IBB domain. Over residues 12 to 22 (FSVSQDLNSTA) the composition is skewed to polar residues. The span at 69-89 (DWTGMESEEEEEKKDDEEMDV) shows a compositional bias: acidic residues. Phosphoserine is present on serine 75. The tract at residues 128 to 130 (GKR) is interaction with m3G-cap structure. Residues 210–330 (LHSKLPEEEG…GIMGKLTPRA (121 aa)) are necessary for binding to the m3G-cap structure. A disordered region spans residues 319–362 (KEGIMGKLTPRASENGHYELEHLSTPKLKSPPQRPNHPESLMEN). Over residues 332 to 342 (ENGHYELEHLS) the composition is skewed to basic and acidic residues.

It belongs to the snurportin family. As to quaternary structure, component of an import snRNP complex composed of KPNB1, SNUPN, SMN1 and ZNF259. Component of a nuclear export receptor complex composed of KPNB1, Ran, SNUPN and XPO1. Found in a trimeric export complex with SNUPN, Ran and XPO1. Interacts (via IBB domain) with KPNB1; the interaction is direct. Interacts with DDX20, IPO7, SMN1, SNRPB and XPO1. Interacts directly with XPO1. Its interaction with XPO1 and binding to m3G-cap U snRNPs appears to be mutually exclusive. Can form homomers.

The protein resides in the nucleus. It is found in the cytoplasm. Functionally, functions as an U snRNP-specific nuclear import adapter. Involved in the trimethylguanosine (m3G)-cap-dependent nuclear import of U snRNPs. Binds specifically to the terminal m3G-cap U snRNAs. This chain is Snurportin-1 (SNUPN), found in Bos taurus (Bovine).